Reading from the N-terminus, the 176-residue chain is Large ribosomal subunit protein uL6 (176 aa).

Belongs to the universal ribosomal protein uL6 family. As to quaternary structure, part of the 50S ribosomal subunit.

In terms of biological role, this protein binds to the 23S rRNA, and is important in its secondary structure. It is located near the subunit interface in the base of the L7/L12 stalk, and near the tRNA binding site of the peptidyltransferase center. The sequence is that of Large ribosomal subunit protein uL6 from Burkholderia ambifaria (strain MC40-6).